A 241-amino-acid chain; its full sequence is MKILLIGYGAMNQRVARLAEEKGHEIIGVIEPQKNETTPYTHYDHITDAQNEADVAIDFSNPNLLFPLLEEEFQLPLVIATTGEKEKLIEKLNELSHNMPVFFSANMSYGVHALTKILEAAIPLLQDYDIELTEAHHNKKVDAPSGTLVKLYDVIKDLRQNITPVYDRHELTEQRTKDEVGIHSIRGGTIVGEHDVLFAGTDETITLSHKAQSKDIFANGAITAAEKLINQSNGYYTFDNL.

Residues A80–T82 and S104–M107 each bind NAD(+). The Proton donor/acceptor role is filled by H136. H137 contributes to the (S)-2,3,4,5-tetrahydrodipicolinate binding site. The active-site Proton donor is K140. G146–T147 is a binding site for (S)-2,3,4,5-tetrahydrodipicolinate.

This sequence belongs to the DapB family.

The protein localises to the cytoplasm. It catalyses the reaction (S)-2,3,4,5-tetrahydrodipicolinate + NAD(+) + H2O = (2S,4S)-4-hydroxy-2,3,4,5-tetrahydrodipicolinate + NADH + H(+). The catalysed reaction is (S)-2,3,4,5-tetrahydrodipicolinate + NADP(+) + H2O = (2S,4S)-4-hydroxy-2,3,4,5-tetrahydrodipicolinate + NADPH + H(+). It participates in amino-acid biosynthesis; L-lysine biosynthesis via DAP pathway; (S)-tetrahydrodipicolinate from L-aspartate: step 4/4. In terms of biological role, catalyzes the conversion of 4-hydroxy-tetrahydrodipicolinate (HTPA) to tetrahydrodipicolinate. The protein is 4-hydroxy-tetrahydrodipicolinate reductase of Staphylococcus haemolyticus (strain JCSC1435).